The primary structure comprises 300 residues: Iron/alpha-ketoglutarate-dependent dioxygenase okaE (300 aa).

Residues H134, D136, and H210 each coordinate Fe cation.

This sequence belongs to the PhyH family. As to quaternary structure, homodimer. Requires Fe cation as cofactor.

It carries out the reaction okaramine A + 2-oxoglutarate + AH2 + O2 = 12-deshydroxyl okaramine E + succinate + A + CO2 + H2O. It catalyses the reaction 12-deshydroxyl okaramine E + 2-oxoglutarate + O2 = okaramine E + succinate + CO2. The catalysed reaction is okaramine A + 2-oxoglutarate + O2 = okaramine E + succinate + CO2. Its pathway is alkaloid biosynthesis. It participates in secondary metabolite biosynthesis; terpenoid biosynthesis. Its function is as follows. Iron/alpha-ketoglutarate-dependent dioxygenase; part of the gene cluster that mediates the biosynthesis of okaramine B, a prenylated indole alkaloid that possesses an unusual octacyclic ring system, including a four-membered azetidine ring and an eight-membered azocine ring, and that exhibits insecticidal activity against silkworm larvae. Within the pathway, okaE forms the unusual 2-dimethyl-3-methyl-azetidine ring to yield 12-deshydroxyl okaramine E from okaramine A. OkaE also catalyzes the hydroxylation of 12-deshydroxyl okaramine E to produce okaramine E. The biosynthesis begins with the NRPS okaA that condenses two tryptophan molecules into cyclo(L-Trp-L-Trp). Prenylation by the prenyltransferase okaC then leads to the formation of cyclo(N8-(alpha,alpha-dimethylallyl)-L-Trp-6a-(alpha,alpha-dime-thylallyl)-L-Trp). This is followed by indole 2,3-epoxidation by the FAD-dependent monooxygenase okaB to facilitate the formation of the hexahydropyrrolo[2,3-b]indole (HPI) moiety of okaramine C. The cytochrome P450 monooxygenase okaD then likely catalyzes formation of the eight-membered ring of okaramine A. The dioxygenase okaE further forms the unusual 2-dimethyl-3-methyl-azetidine ring to yield 12-deshydroxyl okaramine E, as well as the hydroxylation of 12-deshydroxyl okaramine E to produce okaramine E. The cytochrome P450 monoxygenase okaG converts 12-deshydroxyl okaramine E into 3-desmethyl okaramine B which is further methylated by the methyltransferase okaF into okaramine B. In a shunt pathway, okaG and okaF together are also able to convert okaramine E into okaramine D. Okaramine H is produced by nonenzymatic conversion from okaramine A. The protein is Iron/alpha-ketoglutarate-dependent dioxygenase okaE of Penicillium ochrochloron.